The sequence spans 236 residues: MIDDFAPTSSTGDAALYRLLSWLSPAYPVGAYTYSHGLETAVEDGLVHHRQSLADYVATVLHDGAAAIDGPLLAASWRAAQAEDHARLDELAVLGAAWRSSAETALETSAQGRAFCDVTQAAWPDSRFAAFCARHDESIVHPVAFGVASCWQGIPLRAALFGYLSAFAANLVSAGVRLIPLGQTDGQRAQAALLDDLQRATDHGLNTALEDAGSAVPMLDLFSIRHETQYTRLFRS.

The protein belongs to the UreF family. In terms of assembly, ureD, UreF and UreG form a complex that acts as a GTP-hydrolysis-dependent molecular chaperone, activating the urease apoprotein by helping to assemble the nickel containing metallocenter of UreC. The UreE protein probably delivers the nickel.

The protein resides in the cytoplasm. Its function is as follows. Required for maturation of urease via the functional incorporation of the urease nickel metallocenter. This Granulibacter bethesdensis (strain ATCC BAA-1260 / CGDNIH1) protein is Urease accessory protein UreF.